A 474-amino-acid chain; its full sequence is tRNA-2-methylthio-N(6)-dimethylallyladenosine synthase (474 aa).

In terms of domain architecture, MTTase N-terminal spans 3–120; that stretch reads KKLHIKTWGC…LPEMINSVRG (118 aa). The [4Fe-4S] cluster site is built by cysteine 12, cysteine 49, cysteine 83, cysteine 157, cysteine 161, and cysteine 164. The Radical SAM core domain occupies 143-375; sequence RAEGPTAFVS…QERINQQAMA (233 aa). The TRAM domain occupies 378 to 441; that stretch reads RRMLGTTQRI…PNSLRGKVVR (64 aa).

The protein belongs to the methylthiotransferase family. MiaB subfamily. As to quaternary structure, monomer. [4Fe-4S] cluster is required as a cofactor.

The protein localises to the cytoplasm. It catalyses the reaction N(6)-dimethylallyladenosine(37) in tRNA + (sulfur carrier)-SH + AH2 + 2 S-adenosyl-L-methionine = 2-methylsulfanyl-N(6)-dimethylallyladenosine(37) in tRNA + (sulfur carrier)-H + 5'-deoxyadenosine + L-methionine + A + S-adenosyl-L-homocysteine + 2 H(+). In terms of biological role, catalyzes the methylthiolation of N6-(dimethylallyl)adenosine (i(6)A), leading to the formation of 2-methylthio-N6-(dimethylallyl)adenosine (ms(2)i(6)A) at position 37 in tRNAs that read codons beginning with uridine. The polypeptide is tRNA-2-methylthio-N(6)-dimethylallyladenosine synthase (Escherichia coli (strain SMS-3-5 / SECEC)).